A 281-amino-acid polypeptide reads, in one-letter code: MIDEAIRSISKKYTIGGHISVAGGLHNGPARAAVFGFPTFQFFSKNQMRWSSPPLKDDEAAAFKSEVRKYGIESTMIHASYLINLASADPDLYKRSMEAFHDEIDRSDKLGSTFLTVHPGSNPDRADGIRRVRDALSTIGDHAVIILIENTAGQGNVIGTRLDEVAKIIDTSDKKLGVCIDTCHAWASGYDLRDSLEKFIESLDYTIGLDRIFAFHLNDAKREMGSRIDRHELIGKGTIDGGLINLIRDDRLRAKPKIMETPFGEARFEDNLRYMSSKIGE.

Zn(2+) contacts are provided by histidine 78, histidine 118, glutamate 149, aspartate 181, histidine 184, histidine 216, aspartate 229, histidine 231, and glutamate 260.

Belongs to the AP endonuclease 2 family. The cofactor is Zn(2+).

The enzyme catalyses Endonucleolytic cleavage to 5'-phosphooligonucleotide end-products.. Endonuclease IV plays a role in DNA repair. It cleaves phosphodiester bonds at apurinic or apyrimidinic (AP) sites, generating a 3'-hydroxyl group and a 5'-terminal sugar phosphate. The sequence is that of Probable endonuclease 4 from Thermoplasma acidophilum (strain ATCC 25905 / DSM 1728 / JCM 9062 / NBRC 15155 / AMRC-C165).